A 73-amino-acid chain; its full sequence is Large ribosomal subunit protein bL31 (73 aa).

Zn(2+) contacts are provided by Cys16, Cys18, Cys36, and Cys39.

Belongs to the bacterial ribosomal protein bL31 family. Type A subfamily. As to quaternary structure, part of the 50S ribosomal subunit. Requires Zn(2+) as cofactor.

Binds the 23S rRNA. The polypeptide is Large ribosomal subunit protein bL31 (Myxococcus xanthus (strain DK1622)).